The following is a 428-amino-acid chain: Cytochrome bc complex cytochrome b subunit (428 aa).

Composition is skewed to low complexity over residues 1–15 (MAEN…TAPA) and 21–52 (APGA…AAAP). Residues 1–72 (MAENTPKPAA…RPDPNPFKDS (72 aa)) are disordered. Residues 59–72 (PPVDRPDPNPFKDS) show a composition bias toward basic and acidic residues. The helical transmembrane segment at 110–130 (YFGGLGLFFFVIQILTGLLLL) threads the bilayer. Residues His161 and His175 each coordinate heme b. 6 consecutive transmembrane segments (helical) span residues 162–182 (AWSA…TFFM), 193–213 (WVSG…GYLL), 260–280 (LHVV…LTLV), 312–331 (GIGW…MFPW), 369–389 (ELLA…VPFI), and 401–421 (IFTI…YRVY). Heme b-binding residues include His261 and His276.

It belongs to the cytochrome b family. It depends on heme b as a cofactor.

It localises to the cell inner membrane. In terms of biological role, component of the green S-bacteria bc complex, which consists of the Rieske protein and cytochrome b subunit but appears to lack a cytochrome c1-equivalent. This complex has a comparatively low redox potential. The chain is Cytochrome bc complex cytochrome b subunit (petB) from Chlorobaculum thiosulfatiphilum (Chlorobium limicola f.sp. thiosulfatophilum).